Consider the following 183-residue polypeptide: Capsid protein (183 aa).

The tract at residues 136-183 is disordered; that stretch reads NAPILSTLPETTVVRRRGRSPRRRTPSPRRRRSQSPRRRRSQSRESQC. Over residues 149-176 the composition is skewed to basic residues; it reads VRRRGRSPRRRTPSPRRRRSQSPRRRRS. A phosphoserine; by host mark is found at serine 155, serine 162, and serine 170. Residues 155–161 form a 1; half-length repeat; it reads SPRRRTP. A 3 X 8 AA repeats of S-P-R-R-R-[PR]-S-Q region spans residues 155–177; it reads SPRRRTPSPRRRRSQSPRRRRSQ. A Bipartite nuclear localization signal motif is present at residues 158 to 175; that stretch reads RRTPSPRRRRSQSPRRRR. 2 tandem repeats follow at residues 162–169 and 170–177. The segment at 177–183 is RNA binding; the sequence is QSRESQC.

This sequence belongs to the orthohepadnavirus core antigen family. As to quaternary structure, homodimerizes, then multimerizes. Interacts with cytosol exposed regions of viral L glycoprotein present in the reticulum-to-Golgi compartment. Interacts with human FLNB. Phosphorylated form interacts with host importin alpha; this interaction depends on the exposure of the NLS, which itself depends upon genome maturation and/or phosphorylation of the capsid protein. Interacts with host NUP153. Phosphorylated by host SRPK1, SRPK2, and maybe protein kinase C or GAPDH. Phosphorylation is critical for pregenomic RNA packaging. Protein kinase C phosphorylation is stimulated by HBx protein and may play a role in transport of the viral genome to the nucleus at the late step during the viral replication cycle.

The protein resides in the virion. Its subcellular location is the host cytoplasm. Its function is as follows. Self assembles to form an icosahedral capsid. Most capsids appear to be large particles with an icosahedral symmetry of T=4 and consist of 240 copies of capsid protein, though a fraction forms smaller T=3 particles consisting of 180 capsid proteins. Entering capsids are transported along microtubules to the nucleus. Phosphorylation of the capsid is thought to induce exposure of nuclear localization signal in the C-terminal portion of the capsid protein that allows binding to the nuclear pore complex via the importin (karyopherin-) alpha and beta. Capsids are imported in intact form through the nuclear pore into the nuclear basket, where it probably binds NUP153. Only capsids that contain the mature viral genome can release the viral DNA and capsid protein into the nucleoplasm. Immature capsids get stuck in the basket. Capsids encapsulate the pre-genomic RNA and the P protein. Pre-genomic RNA is reverse-transcribed into DNA while the capsid is still in the cytoplasm. The capsid can then either be directed to the nucleus, providing more genomes for transcription, or bud through the endoplasmic reticulum to provide new virions. The polypeptide is Capsid protein (Hepatitis B virus genotype D subtype ayw (isolate France/Tiollais/1979) (HBV-D)).